Reading from the N-terminus, the 480-residue chain is Glutamyl-tRNA(Gln) amidotransferase subunit A (480 aa).

Catalysis depends on charge relay system residues K70 and S145. The active-site Acyl-ester intermediate is the S169.

The protein belongs to the amidase family. GatA subfamily. As to quaternary structure, heterotrimer of A, B and C subunits.

The catalysed reaction is L-glutamyl-tRNA(Gln) + L-glutamine + ATP + H2O = L-glutaminyl-tRNA(Gln) + L-glutamate + ADP + phosphate + H(+). In terms of biological role, allows the formation of correctly charged Gln-tRNA(Gln) through the transamidation of misacylated Glu-tRNA(Gln) in organisms which lack glutaminyl-tRNA synthetase. The reaction takes place in the presence of glutamine and ATP through an activated gamma-phospho-Glu-tRNA(Gln). The sequence is that of Glutamyl-tRNA(Gln) amidotransferase subunit A from Lactobacillus delbrueckii subsp. bulgaricus (strain ATCC BAA-365 / Lb-18).